Reading from the N-terminus, the 186-residue chain is ATP synthase subunit b' (186 aa).

The chain crosses the membrane as a helical span at residues 39 to 59; it reads IFWLLLALGAIYWLLKNIAIP.

It belongs to the ATPase B chain family. As to quaternary structure, F-type ATPases have 2 components, F(1) - the catalytic core - and F(0) - the membrane proton channel. F(1) has five subunits: alpha(3), beta(3), gamma(1), delta(1), epsilon(1). F(0) has four main subunits: a(1), b(1), b'(1) and c(10-14). The alpha and beta chains form an alternating ring which encloses part of the gamma chain. F(1) is attached to F(0) by a central stalk formed by the gamma and epsilon chains, while a peripheral stalk is formed by the delta, b and b' chains.

Its subcellular location is the cellular chromatophore membrane. Its function is as follows. F(1)F(0) ATP synthase produces ATP from ADP in the presence of a proton or sodium gradient. F-type ATPases consist of two structural domains, F(1) containing the extramembraneous catalytic core and F(0) containing the membrane proton channel, linked together by a central stalk and a peripheral stalk. During catalysis, ATP synthesis in the catalytic domain of F(1) is coupled via a rotary mechanism of the central stalk subunits to proton translocation. Component of the F(0) channel, it forms part of the peripheral stalk, linking F(1) to F(0). The b'-subunit is a diverged and duplicated form of b found in plants and photosynthetic bacteria. The polypeptide is ATP synthase subunit b' (Rhodobacter capsulatus (Rhodopseudomonas capsulata)).